The primary structure comprises 999 residues: Sarcoplasmic/endoplasmic reticulum calcium ATPase 3 (999 aa).

The residue at position 1 (methionine 1) is an N-acetylmethionine. Over 1 to 48 (MEEAHLLSAADVLRRFSVTAEGGLSLEQVTDARERYGPNELPTEEGKS) the chain is Cytoplasmic. Serine 17 carries the phosphoserine modification. The residue at position 19 (threonine 19) is a Phosphothreonine. Serine 25 is modified (phosphoserine). The chain crosses the membrane as a helical span at residues 49–69 (LWELVVEQFEDLLVRILLLAA). Over 70 to 89 (LVSFVLAWFEEGEETTTAFV) the chain is Lumenal. The chain crosses the membrane as a helical span at residues 90-110 (EPLVIMLILVANAIVGVWQER). Residues 111-253 (NAESAIEALK…PERTPLQRKL (143 aa)) lie on the Cytoplasmic side of the membrane. The helical transmembrane segment at 254-273 (DEFGRQLSHAISVICVAVWV) threads the bilayer. Residues 274–295 (INIGHFADPAHGGSWLRGAVYY) lie on the Lumenal side of the membrane. The helical transmembrane segment at 296 to 313 (FKIAVALAVAAIPEGLPA) threads the bilayer. Ca(2+) contacts are provided by valine 304, alanine 305, isoleucine 307, and glutamate 309. The Cytoplasmic portion of the chain corresponds to 314 to 757 (VITTCLALGT…EEGRAIYNNM (444 aa)). Catalysis depends on aspartate 351, which acts as the 4-aspartylphosphate intermediate. Aspartate 351 and threonine 353 together coordinate Mg(2+). Threonine 353 is an ATP binding site. The interval 370–400 (AEAEAGTCRLHEFTISGTTYTPEGEVRQGEQ) is interaction with phospholamban 1. Phosphothreonine is present on threonine 415. ATP is bound by residues glutamate 442, arginine 489, lysine 515, arginine 560, threonine 625, glycine 626, and aspartate 627. Serine 662 carries the phosphoserine modification. Residues arginine 678 and lysine 684 each coordinate ATP. Aspartate 703 provides a ligand contact to Mg(2+). Asparagine 706 provides a ligand contact to ATP. A helical transmembrane segment spans residues 758–777 (KQFIRYLISSNVGEVVCIFL). Ca(2+) is bound by residues asparagine 768 and glutamate 771. At 778–787 (TAILGLPEAL) the chain is on the lumenal side. Residues 788-808 (IPVQLLWVNLVTDGLPATALG) traverse the membrane as a helical segment. The interaction with phospholamban 2 stretch occupies residues 788–808 (IPVQLLWVNLVTDGLPATALG). Positions 796, 799, and 800 each coordinate Ca(2+). Residues 809–828 (FNPPDLDIMEKPPRNPREAL) are Cytoplasmic-facing. The helical transmembrane segment at 829–851 (ISGWLFFRYLAIGVYVGLATVAA) threads the bilayer. Residues 852–897 (ATWWFLYDTEGPQVTFYQLRNFLKCSEDNPLFAGIDCKVFESRFPT) lie on the Lumenal side of the membrane. Residues 898-917 (TMALSVLVTIEMCNALNSVS) traverse the membrane as a helical segment. Ca(2+) is bound at residue glutamate 908. Residues 918–930 (ENQSLLRMPPWLN) are Cytoplasmic-facing. A helical transmembrane segment spans residues 931–949 (PWLLGAVVMSMALHFLILL). The Lumenal portion of the chain corresponds to 950 to 964 (VPPLPLIFQVTPLSG). A helical membrane pass occupies residues 965–985 (RQWGVVLQMSLPVILLDEALK). At 986–999 (YLSRNHMDEKKDLK) the chain is on the cytoplasmic side.

Belongs to the cation transport ATPase (P-type) (TC 3.A.3) family. Type IIA subfamily. Interacts with sarcolipin (SLN). Interacts with phospholamban (PLN). Interacts with myoregulin (MRLN). Interacts with DWORF. Interacts with VMP1. Interacts with TUNAR; the interaction occurs at low levels in low glucose conditions and is increased by high glucose levels. It depends on Mg(2+) as a cofactor.

Its subcellular location is the endoplasmic reticulum membrane. The protein localises to the sarcoplasmic reticulum membrane. It carries out the reaction Ca(2+)(in) + ATP + H2O = Ca(2+)(out) + ADP + phosphate + H(+). Its activity is regulated as follows. Inhibited by sarcolipin (SLN), phospholamban (PLN) and myoregulin (MRLN). Enhanced by DWORF; DWORF increases activity by displacing sarcolipin (SLN), phospholamban (PLN) and myoregulin (MRLN). Functionally, this magnesium-dependent enzyme catalyzes the hydrolysis of ATP coupled with the transport of calcium. Transports calcium ions from the cytosol into the sarcoplasmic/endoplasmic reticulum lumen. Contributes to calcium sequestration involved in muscular excitation/contraction. The protein is Sarcoplasmic/endoplasmic reticulum calcium ATPase 3 (Atp2a3) of Mus musculus (Mouse).